The sequence spans 9159 residues: Halomucin (9159 aa).

The N-terminal stretch at 1–30 (MSQTAKPIFAVVVALIVLISGVAFIGSVSA) is a signal peptide. C-type lectin domains are found at residues 644 to 776 (TTGN…YLVE) and 929 to 1060 (YDGH…VEYG). A compositionally biased stretch (polar residues) spans 1310 to 1332 (QPQTVNDPDAVSTRNNNVGSNGL). The interval 1310 to 1351 (QPQTVNDPDAVSTRNNNVGSNGLDSKIEDDQNNGADGNPHGT) is disordered. Residues 1756 to 3380 (VGGLIGESSG…GFNGEHVGGL (1625 aa)) are V-G-G-L motif-rich region. Disordered stretches follow at residues 3484-3514 (GATA…PAPQ), 4878-4912 (ESYW…TTPA), 6570-6589 (TDSA…SSGQ), 7047-7097 (TPTV…GINT), 7660-7702 (ATDS…NPGG), 7888-7923 (IDGD…EPAL), 8212-8237 (STQQ…GAAD), and 8369-8614 (DSTA…GSST). The span at 3495 to 3505 (GTPGGATGYGS) shows a compositional bias: gly residues. The span at 4880–4890 (YWDKGATDKSD) shows a compositional bias: basic and acidic residues. 2 stretches are compositionally biased toward polar residues: residues 7048–7057 (PTVTINSSSD) and 7068–7078 (GEDSTSSNESS). Residues 7079 to 7092 (DGTESDQGDPEDDI) show a composition bias toward acidic residues. Polar residues predominate over residues 7681–7698 (VTGSTPTFVSSGTVTTPE). Positions 7686 to 7793 (PTFVSSGTVT…ITDVDEQPTG (108 aa)) constitute a Cadherin domain. 2 stretches are compositionally biased toward acidic residues: residues 7888–7898 (IDGDGLADDNE) and 7905–7920 (DNDD…EDQE). A compositionally biased stretch (acidic residues) spans 8378 to 8390 (ALEDDSSNQDSGD). Low complexity-rich tracts occupy residues 8391-8529 (DSSN…SSQN) and 8538-8548 (SAAAVGAESGS). Composition is skewed to gly residues over residues 8549–8566 (EMGG…GDGS) and 8574–8608 (AGGG…GSSS).

In terms of processing, probably glycosylated with sugar containing sialic acid. This may further contribute to its overall negative charge, thereby creating an aqueous shield covering the cells.

It localises to the secreted. Its function is as follows. May protect the organism from desiccation stress. May also contribute to the rigidity and maintenance of the unique square cell morphology of H.walsbyi. The polypeptide is Halomucin (hmu) (Haloquadratum walsbyi (strain DSM 16790 / HBSQ001)).